The sequence spans 1706 residues: Brefeldin A-inhibited guanine nucleotide-exchange protein 4 (1706 aa).

One can recognise an SEC7 domain in the interval 555–742; the sequence is MLEQRRAYKI…GSLYDRVVKE (188 aa). Glu-657 is a catalytic residue.

Homodimer.

The protein resides in the cytoplasm. It localises to the cytosol. The protein localises to the membrane. With respect to regulation, inhibited by brefeldin A. Its function is as follows. Activates the ARF proteins by exchanging bound GDP for free GTP. Plays a role in vesicular protein sorting. The protein is Brefeldin A-inhibited guanine nucleotide-exchange protein 4 (BIG4) of Arabidopsis thaliana (Mouse-ear cress).